A 161-amino-acid polypeptide reads, in one-letter code: N5-carboxyaminoimidazole ribonucleotide mutase (161 aa).

3 residues coordinate substrate: serine 9, aspartate 12, and arginine 39.

It belongs to the AIR carboxylase family. Class I subfamily.

The catalysed reaction is 5-carboxyamino-1-(5-phospho-D-ribosyl)imidazole + H(+) = 5-amino-1-(5-phospho-D-ribosyl)imidazole-4-carboxylate. The protein operates within purine metabolism; IMP biosynthesis via de novo pathway; 5-amino-1-(5-phospho-D-ribosyl)imidazole-4-carboxylate from 5-amino-1-(5-phospho-D-ribosyl)imidazole (N5-CAIR route): step 2/2. In terms of biological role, catalyzes the conversion of N5-carboxyaminoimidazole ribonucleotide (N5-CAIR) to 4-carboxy-5-aminoimidazole ribonucleotide (CAIR). The sequence is that of N5-carboxyaminoimidazole ribonucleotide mutase from Vibrio vulnificus (strain CMCP6).